A 640-amino-acid polypeptide reads, in one-letter code: MGTAAEVRMVLYEDDSVQVNYADGSTLQLSPCGSEFLFEKAPPPSTHPLEQPERIRQRTHFVISNYREQLQRALDFRNSSATCPFLSESIIPSERKKRVFIDFSEVEWPSPDRDDCITYSESGIVKITSLDGHAYLCLPRSQHEFTVHFLCKVSQKPDSSVMPPETKNRVPKEELVGKTRNVCRSGRLSGQRLRNKENEPPRQLLTSKNASANIHCVSETEGREELPSPGTKRRYVHVWVKQSWSAASCPEEWKYPLSLGLRFYNKVPAASAADAEVPVSGIVTSDNPEERGTGVSVLPRALLLSCSAPHMHRWNFCDSLLQRQSDAEEYSYPELIKVVWYKGVTYRLTHKNVNSIEIFPGDGSVFKSEGTHFGNYFTYSSQDNSGKREEKTYSVNNLPPDRPGNLYSVRSLIKQATRILQHCAKIRLSLSHNYRVCCWRMAPGVNVSSILPVLLKESLIPGVGRFLAYSDDKVHAVFLDGVTLTLNWDLSSSAEKTQVDQGLRLRWCRLTFPDGQDQLIQTEHPGVYERYVTSVVTWCRRLTQTSSRHVSPRLSPVPEENWSVASELEKIQKFNWLLENSGVLNLTSGKKNEQCSSDHCKPGSSETLPEATNEESVSVALKRTSEVLQDIDYLLSLTRK.

Positions 594 to 614 (QCSSDHCKPGSSETLPEATNE) are disordered.

This is an uncharacterized protein from Rattus norvegicus (Rat).